A 338-amino-acid polypeptide reads, in one-letter code: Fructose-1,6-bisphosphatase class 1 (338 aa).

The Mg(2+) site is built by Glu94, Asp116, Leu118, and Asp119. Substrate is bound by residues 119–122 (DGSS), Asn210, and Lys276. Glu282 provides a ligand contact to Mg(2+).

This sequence belongs to the FBPase class 1 family. As to quaternary structure, homotetramer. Requires Mg(2+) as cofactor.

The protein localises to the cytoplasm. The enzyme catalyses beta-D-fructose 1,6-bisphosphate + H2O = beta-D-fructose 6-phosphate + phosphate. Its pathway is carbohydrate biosynthesis; gluconeogenesis. This Paraburkholderia phytofirmans (strain DSM 17436 / LMG 22146 / PsJN) (Burkholderia phytofirmans) protein is Fructose-1,6-bisphosphatase class 1.